A 384-amino-acid polypeptide reads, in one-letter code: MKTELTLLDHSYELLRYPAENQHVSWQAWDSADEYLMEYVAQNITDLNGLNIHIYNDDFGALGVWFATNNAPLWISDSFVAHKALALNLERNHLPIENVNVQNSLYKANQKADLVLIKVPKTLALLEQQLIDLQSSVTPETRIIAAGKANAIQKSTLALFEKHLGLTTTSLAKKKSRLIFCQYDGVKQSVSPYPTKWKTDNTQFIMSNLANVFSRQQLDIGARVLLAHLPDANHKCIVDLGCGNGVLGLHVLHKSPGAHVIFVDESFMAIASAKMNIEQNMPDKLDQCKFIVSNCLDECLSSGENEATVDIVLCNPPFHQQNTITDHIALQMFKDSKRILKHAGELRVVGNRHLDYPQTIKRLFGHYKVLASDRKFSILSAIKK.

The protein belongs to the methyltransferase superfamily. RlmG family.

It is found in the cytoplasm. The enzyme catalyses guanosine(1835) in 23S rRNA + S-adenosyl-L-methionine = N(2)-methylguanosine(1835) in 23S rRNA + S-adenosyl-L-homocysteine + H(+). Its function is as follows. Specifically methylates the guanine in position 1835 (m2G1835) of 23S rRNA. The sequence is that of Ribosomal RNA large subunit methyltransferase G from Pseudoalteromonas atlantica (strain T6c / ATCC BAA-1087).